The following is a 366-amino-acid chain: 3-dehydroquinate synthase (366 aa).

NAD(+)-binding positions include 73–78 (DGERAK), 107–111 (GVVGD), 131–132 (TT), lysine 144, and lysine 153. 3 residues coordinate Zn(2+): glutamate 186, histidine 249, and histidine 266.

It belongs to the sugar phosphate cyclases superfamily. Dehydroquinate synthase family. It depends on Co(2+) as a cofactor. Zn(2+) serves as cofactor. NAD(+) is required as a cofactor.

The protein resides in the cytoplasm. It carries out the reaction 7-phospho-2-dehydro-3-deoxy-D-arabino-heptonate = 3-dehydroquinate + phosphate. It functions in the pathway metabolic intermediate biosynthesis; chorismate biosynthesis; chorismate from D-erythrose 4-phosphate and phosphoenolpyruvate: step 2/7. Functionally, catalyzes the conversion of 3-deoxy-D-arabino-heptulosonate 7-phosphate (DAHP) to dehydroquinate (DHQ). In Koribacter versatilis (strain Ellin345), this protein is 3-dehydroquinate synthase.